Consider the following 292-residue polypeptide: Light-independent protochlorophyllide reductase iron-sulfur ATP-binding protein (292 aa).

Residues 10 to 15 (GIGKST) and Lys-39 each bind ATP. Position 14 (Ser-14) interacts with Mg(2+). Cys-95 is a [4Fe-4S] cluster binding site. 182 to 183 (NR) contributes to the ATP binding site.

The protein belongs to the NifH/BchL/ChlL family. As to quaternary structure, homodimer. Protochlorophyllide reductase is composed of three subunits; ChlL, ChlN and ChlB. [4Fe-4S] cluster is required as a cofactor.

It is found in the plastid. The protein resides in the chloroplast. It catalyses the reaction chlorophyllide a + oxidized 2[4Fe-4S]-[ferredoxin] + 2 ADP + 2 phosphate = protochlorophyllide a + reduced 2[4Fe-4S]-[ferredoxin] + 2 ATP + 2 H2O. Its pathway is porphyrin-containing compound metabolism; chlorophyll biosynthesis (light-independent). In terms of biological role, component of the dark-operative protochlorophyllide reductase (DPOR) that uses Mg-ATP and reduced ferredoxin to reduce ring D of protochlorophyllide (Pchlide) to form chlorophyllide a (Chlide). This reaction is light-independent. The L component serves as a unique electron donor to the NB-component of the complex, and binds Mg-ATP. In Huperzia lucidula (Shining clubmoss), this protein is Light-independent protochlorophyllide reductase iron-sulfur ATP-binding protein.